Reading from the N-terminus, the 320-residue chain is Cytochrome f (320 aa).

The signal sequence occupies residues 1–35 (MRNINTYDWMKKWMTRSISILVMIHMITRTSISNA). Residues Tyr-36, Cys-56, Cys-59, and His-60 each contribute to the heme site. Residues 286–306 (VQGLLLLLASVILAQIFLVLK) traverse the membrane as a helical segment.

It belongs to the cytochrome f family. The 4 large subunits of the cytochrome b6-f complex are cytochrome b6, subunit IV (17 kDa polypeptide, petD), cytochrome f and the Rieske protein, while the 4 small subunits are PetG, PetL, PetM and PetN. The complex functions as a dimer. The cofactor is heme.

It is found in the plastid. It localises to the chloroplast thylakoid membrane. Functionally, component of the cytochrome b6-f complex, which mediates electron transfer between photosystem II (PSII) and photosystem I (PSI), cyclic electron flow around PSI, and state transitions. This chain is Cytochrome f, found in Cycas taitungensis (Prince sago).